The sequence spans 37 residues: Large ribosomal subunit protein bL36 (37 aa).

It belongs to the bacterial ribosomal protein bL36 family.

The polypeptide is Large ribosomal subunit protein bL36 (Chromobacterium violaceum (strain ATCC 12472 / DSM 30191 / JCM 1249 / CCUG 213 / NBRC 12614 / NCIMB 9131 / NCTC 9757 / MK)).